Here is a 345-residue protein sequence, read N- to C-terminus: Homeobox-leucine zipper protein HOX16 (345 aa).

Positions 76–135 (LPEKKRRLTPEQVHLLERSFEEENKLEPERKTELARKLGLQPRQVAVWFQNRRARWKTKQ) form a DNA-binding region, homeobox. The tract at residues 134 to 178 (KQLERDFDRLKASFDALRADHDALLQDNHRLHSQVMSLTEKLQEK) is leucine-zipper. The segment at 220 to 241 (FEEQQEQQVKAEDRLSTGSGGS) is disordered.

The protein belongs to the HD-ZIP homeobox family. Class I subfamily. In terms of tissue distribution, expressed in seedlings, stems, leaf sheaths and blades and panicles.

The protein resides in the nucleus. Functionally, probable transcription factor. The sequence is that of Homeobox-leucine zipper protein HOX16 (HOX16) from Oryza sativa subsp. indica (Rice).